A 419-amino-acid chain; its full sequence is 3-phosphoshikimate 1-carboxyvinyltransferase (419 aa).

3-phosphoshikimate-binding residues include Lys-21, Ser-22, and Arg-26. Lys-21 contacts phosphoenolpyruvate. Positions 91 and 119 each coordinate phosphoenolpyruvate. The 3-phosphoshikimate site is built by Ser-164, Ser-165, Gln-166, Ser-191, Asp-305, and Lys-332. A phosphoenolpyruvate-binding site is contributed by Gln-166. Asp-305 functions as the Proton acceptor in the catalytic mechanism. Phosphoenolpyruvate contacts are provided by Arg-336 and Arg-376.

It belongs to the EPSP synthase family. In terms of assembly, monomer.

It localises to the cytoplasm. The catalysed reaction is 3-phosphoshikimate + phosphoenolpyruvate = 5-O-(1-carboxyvinyl)-3-phosphoshikimate + phosphate. Its pathway is metabolic intermediate biosynthesis; chorismate biosynthesis. In terms of biological role, catalyzes the transfer of the enolpyruvyl moiety of phosphoenolpyruvate (PEP) to the 5-hydroxyl of shikimate-3-phosphate (S3P) to produce enolpyruvyl shikimate-3-phosphate and inorganic phosphate. The protein is 3-phosphoshikimate 1-carboxyvinyltransferase of Methanothermobacter thermautotrophicus (strain ATCC 29096 / DSM 1053 / JCM 10044 / NBRC 100330 / Delta H) (Methanobacterium thermoautotrophicum).